The chain runs to 445 residues: Methyl-CpG-binding domain protein 4-like protein (445 aa).

D429 is a catalytic residue.

As to expression, isoform 1 and isoform 4: Expressed in leaves and flowers, but not in roots or stems.

Its subcellular location is the nucleus. Functionally, monofunctional DNA glycosylase targeting U:G and T:G mispairs. Excises uracil derivatives and exhibits a preference for a CpG sequence context, irrespective of the methylation status of the complementary strand. The activity follows a biphasic kinetics, with an initial burst of product accumulation followed by a slower phase. Specifically binds its reaction product. Triggers the base excision repair (BER) pathway. This Arabidopsis thaliana (Mouse-ear cress) protein is Methyl-CpG-binding domain protein 4-like protein.